Here is a 764-residue protein sequence, read N- to C-terminus: Metabotropic glutamate receptor-like protein H (764 aa).

Residues 1–20 (MKNILKILILILICINKINC) form the signal peptide. Residues 21 to 393 (LDGDGKQFRM…EVEFSQSIQN (373 aa)) are Extracellular-facing. Asn72, Asn260, Asn278, Asn344, and Asn379 each carry an N-linked (GlcNAc...) asparagine glycan. A helical transmembrane segment spans residues 394 to 414 (GFSITTGILIGITILMMIGII). Over 415–427 (KYSKTPSMRSASP) the chain is Cytoplasmic. A helical transmembrane segment spans residues 428 to 448 (IFLNFILAGGIIVYIGIIVWV). Residues 449 to 464 (GPMSTHSCNARLWLVT) lie on the Extracellular side of the membrane. A helical transmembrane segment spans residues 465–485 (LGFSTLIGSLVVKNFRIWLIF). Residues 486–500 (DNPELKSIKITNYQL) lie on the Cytoplasmic side of the membrane. A helical transmembrane segment spans residues 501–521 (FPWVGACLVINIILMAILTSV). At 522–552 (GDLKQIDAMNIDSLGKYEYMKVCKMNSSGAS) the chain is on the extracellular side. A glycan (N-linked (GlcNAc...) asparagine) is linked at Asn547. The chain crosses the membrane as a helical span at residues 553 to 573 (TLYTILAYFAALLLVGVFVSW). Residues 574 to 587 (KIRIVDILEFNESG) are Cytoplasmic-facing. A helical membrane pass occupies residues 588-608 (AIANTLYAISFCLFVIVPLMI). At 609–617 (SPQDMQSET) the chain is on the extracellular side. A helical membrane pass occupies residues 618–638 (IILCTTGLFITTAALLIIFIP). Over 639–764 (KFWRVFRKGA…IIVNDSENNN (126 aa)) the chain is Cytoplasmic. Positions 664 to 764 (ATARAESGSK…IIVNDSENNN (101 aa)) are disordered. Residues 671 to 690 (GSKGSNGNASSGNRTNRRGN) are compositionally biased toward low complexity. The segment covering 707 to 719 (ENQKEKEKIKDDV) has biased composition (basic and acidic residues). A compositionally biased stretch (acidic residues) spans 731-748 (FTDEASDTDNNEFNDIEL).

It in the N-terminal section; belongs to the BMP lipoprotein family. In the C-terminal section; belongs to the G-protein coupled receptor 3 family. GABA-B receptor subfamily.

It localises to the membrane. The sequence is that of Metabotropic glutamate receptor-like protein H (grlH) from Dictyostelium discoideum (Social amoeba).